Consider the following 307-residue polypeptide: Malate dehydrogenase (307 aa).

Residues 8–13 and D33 each bind NAD(+); that span reads GAGRVG. R82 and R88 together coordinate substrate. NAD(+) contacts are provided by residues N95 and 118–120; that span reads VSN. Residues N120 and R151 each contribute to the substrate site. The active-site Proton acceptor is the H175.

It belongs to the LDH/MDH superfamily. MDH type 3 family.

It carries out the reaction (S)-malate + NAD(+) = oxaloacetate + NADH + H(+). Catalyzes the reversible oxidation of malate to oxaloacetate. This is Malate dehydrogenase from Thioalkalivibrio sulfidiphilus (strain HL-EbGR7).